The following is a 227-amino-acid chain: Cytochrome c oxidase subunit 2 (227 aa).

Topologically, residues 1 to 14 (MAYPFQLGLQDATS) are mitochondrial intermembrane. The helical transmembrane segment at 15–45 (PIMEELLHFHDHTLMIVFLISSLVLYIISLM) threads the bilayer. Over 46–59 (LTTKLTHTSTMDAQ) the chain is Mitochondrial matrix. Residues 60–87 (EVETVWTILPAIILILIALPSLRILYMM) traverse the membrane as a helical segment. Residues 88–227 (DEINNPSLTV…YFETWSALMV (140 aa)) are Mitochondrial intermembrane-facing. Residues H161, C196, E198, C200, H204, and M207 each coordinate Cu cation. E198 provides a ligand contact to Mg(2+). Y218 carries the post-translational modification Phosphotyrosine.

The protein belongs to the cytochrome c oxidase subunit 2 family. In terms of assembly, component of the cytochrome c oxidase (complex IV, CIV), a multisubunit enzyme composed of 14 subunits. The complex is composed of a catalytic core of 3 subunits MT-CO1, MT-CO2 and MT-CO3, encoded in the mitochondrial DNA, and 11 supernumerary subunits COX4I, COX5A, COX5B, COX6A, COX6B, COX6C, COX7A, COX7B, COX7C, COX8 and NDUFA4, which are encoded in the nuclear genome. The complex exists as a monomer or a dimer and forms supercomplexes (SCs) in the inner mitochondrial membrane with NADH-ubiquinone oxidoreductase (complex I, CI) and ubiquinol-cytochrome c oxidoreductase (cytochrome b-c1 complex, complex III, CIII), resulting in different assemblies (supercomplex SCI(1)III(2)IV(1) and megacomplex MCI(2)III(2)IV(2)). Found in a complex with TMEM177, COA6, COX18, COX20, SCO1 and SCO2. Interacts with TMEM177 in a COX20-dependent manner. Interacts with COX20. Interacts with COX16. It depends on Cu cation as a cofactor.

The protein localises to the mitochondrion inner membrane. The catalysed reaction is 4 Fe(II)-[cytochrome c] + O2 + 8 H(+)(in) = 4 Fe(III)-[cytochrome c] + 2 H2O + 4 H(+)(out). In terms of biological role, component of the cytochrome c oxidase, the last enzyme in the mitochondrial electron transport chain which drives oxidative phosphorylation. The respiratory chain contains 3 multisubunit complexes succinate dehydrogenase (complex II, CII), ubiquinol-cytochrome c oxidoreductase (cytochrome b-c1 complex, complex III, CIII) and cytochrome c oxidase (complex IV, CIV), that cooperate to transfer electrons derived from NADH and succinate to molecular oxygen, creating an electrochemical gradient over the inner membrane that drives transmembrane transport and the ATP synthase. Cytochrome c oxidase is the component of the respiratory chain that catalyzes the reduction of oxygen to water. Electrons originating from reduced cytochrome c in the intermembrane space (IMS) are transferred via the dinuclear copper A center (CU(A)) of subunit 2 and heme A of subunit 1 to the active site in subunit 1, a binuclear center (BNC) formed by heme A3 and copper B (CU(B)). The BNC reduces molecular oxygen to 2 water molecules using 4 electrons from cytochrome c in the IMS and 4 protons from the mitochondrial matrix. The chain is Cytochrome c oxidase subunit 2 (MT-CO2) from Canis adustus (Side-striped jackal).